The following is an 88-amino-acid chain: MTLFSSISSMSSSMTSSKSSFASFGNGTRVSSNSIACSVDCDGKGVSSGSDLTGGAKSGGDCGGKGRPNNHGHGHENCHGGKGPGNSC.

Positions 1 to 24 are enriched in low complexity; sequence MTLFSSISSMSSSMTSSKSSFASF. Disordered stretches follow at residues 1–25 and 45–88; these read MTLF…ASFG and GVSS…GNSC. Positions 56–66 are enriched in gly residues; that stretch reads AKSGGDCGGKG.

It belongs to the hssA/B family.

The sequence is that of HssA/B-like protein 64 (hssl64) from Dictyostelium discoideum (Social amoeba).